The primary structure comprises 275 residues: NAD(P)H dehydrogenase [quinone] 1 (275 aa).

FAD contacts are provided by residues His13, 19–20, and Gln68; that span reads FN. The residue at position 83 (Ser83) is a Phosphoserine. 105 to 108 is an FAD binding site; that stretch reads LQWF. Residue 127-129 participates in substrate binding; sequence AYT. FAD is bound by residues 149–152, Tyr157, and Arg202; that span reads TTGG. An important for apoenzyme conformational stability region spans residues 226–275; sequence PSSLFDLNFQAGFLLKKEIEDEQKNNKYGLSVGHHLGKPIPTDNQIKARK. Residue Lys252 forms a Glycyl lysine isopeptide (Lys-Gly) (interchain with G-Cter in SUMO2) linkage.

Belongs to the NAD(P)H dehydrogenase (quinone) family. Homodimer. Interacts with PDLIM4 isoform 2; this interaction stabilizes PDLIM4 isoform 2 in response to oxidative stress and protects it from ubiquitin-independent degradation by the core 20S proteasome. Interacts with TP73 (via SAM domain); this interaction is NADH-dependent, stabilizes TP73 in response to oxidative stress and protects it from ubiquitin-independent degradation by the 20S proteasome. Interacts with TP53; this interaction is NADH-dependent, stabilizes TP53 in response to oxidative stress and protects it from ubiquitin-independent degradation by the 20S proteasome. FAD serves as cofactor.

It localises to the cytoplasm. The protein resides in the cytosol. The enzyme catalyses a quinone + NADH + H(+) = a quinol + NAD(+). The catalysed reaction is a quinone + NADPH + H(+) = a quinol + NADP(+). It catalyses the reaction ubiquinone-10 + NADH + H(+) = ubiquinol-10 + NAD(+). It carries out the reaction menadione + NADH + H(+) = menadiol + NAD(+). Its function is as follows. Flavin-containing quinone reductase that catalyzes two-electron reduction of quinones to hydroquinones using either NADH or NADPH as electron donors. In a ping-pong kinetic mechanism, the electrons are sequentially transferred from NAD(P)H to flavin cofactor and then from reduced flavin to the quinone, bypassing the formation of semiquinone and reactive oxygen species. Regulates cellular redox state primarily through quinone detoxification. Reduces components of plasma membrane redox system such as coenzyme Q and vitamin quinones, producing antioxidant hydroquinone forms. In the process may function as superoxide scavenger to prevent hydroquinone oxidation and facilitate excretion. Alternatively, can activate quinones and their derivatives by generating redox reactive hydroquinones with DNA cross-linking antitumor potential. Acts as a gatekeeper of the core 20S proteasome known to degrade proteins with unstructured regions. Upon oxidative stress, interacts with tumor suppressors TP53 and TP73 in a NADH-dependent way and inhibits their ubiquitin-independent degradation by the 20S proteasome. The sequence is that of NAD(P)H dehydrogenase [quinone] 1 (NQO1) from Cavia porcellus (Guinea pig).